A 185-amino-acid chain; its full sequence is Large ribosomal subunit protein bL25 (185 aa).

Belongs to the bacterial ribosomal protein bL25 family. CTC subfamily. Part of the 50S ribosomal subunit; part of the 5S rRNA/L5/L18/L25 subcomplex. Contacts the 5S rRNA. Binds to the 5S rRNA independently of L5 and L18.

Functionally, this is one of the proteins that binds to the 5S RNA in the ribosome where it forms part of the central protuberance. This chain is Large ribosomal subunit protein bL25, found in Chlamydia abortus (strain DSM 27085 / S26/3) (Chlamydophila abortus).